Consider the following 498-residue polypeptide: Beta-1,3-glucosyltransferase (498 aa).

At 1–6 the chain is on the cytoplasmic side; it reads MRPPAC. A helical; Signal-anchor for type II membrane protein transmembrane segment spans residues 7-27; the sequence is WWLLAPPALLALLTCSLAFGL. Residues 28 to 498 lie on the Lumenal side of the membrane; sequence ASEDTKKEVK…ETQKGFREEL (471 aa). Asparagine 336 is a glycosylation site (N-linked (GlcNAc...) asparagine). A Prevents secretion from ER motif is present at residues 495-498; that stretch reads REEL.

Belongs to the glycosyltransferase 31 family. In terms of tissue distribution, widely expressed, with highest levels in testis and uterus.

The protein localises to the endoplasmic reticulum membrane. It functions in the pathway protein modification; protein glycosylation. Its function is as follows. O-glucosyltransferase that transfers glucose toward fucose with a beta-1,3 linkage. Specifically glucosylates O-linked fucosylglycan on TSP type-1 domains of proteins, thereby contributing to elongation of O-fucosylglycan. This is Beta-1,3-glucosyltransferase from Homo sapiens (Human).